Consider the following 179-residue polypeptide: Transcriptional regulator ICP22 homolog (179 aa).

Positions 1-12 (MSRDRDRARPDT) are enriched in basic and acidic residues. A disordered region spans residues 1 to 40 (MSRDRDRARPDTRLSSSDNESDDEDYQLPHSHPEYGSDSS).

Belongs to the herpesviridae ICP22 family.

The polypeptide is Transcriptional regulator ICP22 homolog (MDV088) (Gallid herpesvirus 2 (strain Chicken/Md5/ATCC VR-987) (GaHV-2)).